The sequence spans 282 residues: ATP synthase gamma chain (282 aa).

It belongs to the ATPase gamma chain family. F-type ATPases have 2 components, CF(1) - the catalytic core - and CF(0) - the membrane proton channel. CF(1) has five subunits: alpha(3), beta(3), gamma(1), delta(1), epsilon(1). CF(0) has three main subunits: a, b and c.

The protein resides in the cell membrane. Its function is as follows. Produces ATP from ADP in the presence of a proton gradient across the membrane. The gamma chain is believed to be important in regulating ATPase activity and the flow of protons through the CF(0) complex. In Clostridium botulinum (strain Langeland / NCTC 10281 / Type F), this protein is ATP synthase gamma chain.